The sequence spans 701 residues: C6 finger domain transcription factor nscR (701 aa).

Positions 17 to 43 (CELCRERKVKCDKLDPCTNCSSAGVIC) form a DNA-binding region, zn(2)-C6 fungal-type.

It localises to the nucleus. Functionally, transcription factor that specifically regulates the neosartoricin B biosynthesis gene cluster. This Arthroderma benhamiae (strain ATCC MYA-4681 / CBS 112371) (Trichophyton mentagrophytes) protein is C6 finger domain transcription factor nscR.